The sequence spans 60 residues: Protein YmjC (60 aa).

Residues 40-60 form a disordered region; sequence HKPYPTNKMQTTSGKKVIQDR.

This Escherichia coli (strain K12) protein is Protein YmjC (ymjC).